Here is a 234-residue protein sequence, read N- to C-terminus: Structural PPIase-like protein L605 (234 aa).

Positions 18 to 205 (YMDIVLNNEI…PTFSIGKCGA (188 aa)) constitute a PPIase cyclophilin-type domain.

It belongs to the cyclophilin-type PPIase family. As to quaternary structure, homotrimer.

It localises to the virion. The protein localises to the host cytoplasm. The protein is Structural PPIase-like protein L605 of Acanthamoeba polyphaga mimivirus (APMV).